We begin with the raw amino-acid sequence, 147 residues long: NAD(P)H-quinone oxidoreductase subunit N (147 aa).

Belongs to the complex I NdhN subunit family. In terms of assembly, NDH-1 can be composed of about 15 different subunits; different subcomplexes with different compositions have been identified which probably have different functions.

Its subcellular location is the cellular thylakoid membrane. It catalyses the reaction a plastoquinone + NADH + (n+1) H(+)(in) = a plastoquinol + NAD(+) + n H(+)(out). It carries out the reaction a plastoquinone + NADPH + (n+1) H(+)(in) = a plastoquinol + NADP(+) + n H(+)(out). Its function is as follows. NDH-1 shuttles electrons from an unknown electron donor, via FMN and iron-sulfur (Fe-S) centers, to quinones in the respiratory and/or the photosynthetic chain. The immediate electron acceptor for the enzyme in this species is believed to be plastoquinone. Couples the redox reaction to proton translocation, and thus conserves the redox energy in a proton gradient. Cyanobacterial NDH-1 also plays a role in inorganic carbon-concentration. This Synechococcus sp. (strain JA-2-3B'a(2-13)) (Cyanobacteria bacterium Yellowstone B-Prime) protein is NAD(P)H-quinone oxidoreductase subunit N.